Reading from the N-terminus, the 160-residue chain is Thioredoxin-like protein 4A homolog (160 aa).

The interval 132–160 is disordered; the sequence is KFLKKKKKKKNKKKQKKKIKKIKKKIKNN. Positions 133–160 are enriched in basic residues; sequence FLKKKKKKKNKKKQKKKIKKIKKKIKNN.

The protein belongs to the DIM1 family. Component of the precatalytic spliceosome (spliceosome B complex). Component of the U5 snRNP complex. Component of the U4/U6-U5 tri-snRNP complex.

It localises to the nucleus. Its function is as follows. Plays a role in pre-mRNA splicing as component of the U5 snRNP and U4/U6-U5 tri-snRNP complexes that are involved in spliceosome assembly, and as component of the precatalytic spliceosome (spliceosome B complex). This Dictyostelium discoideum (Social amoeba) protein is Thioredoxin-like protein 4A homolog (txnl4a).